Consider the following 68-residue polypeptide: Large ribosomal subunit protein uL29 (68 aa).

Belongs to the universal ribosomal protein uL29 family.

In Rhodopseudomonas palustris (strain BisB18), this protein is Large ribosomal subunit protein uL29.